The following is a 328-amino-acid chain: Formimidoylglutamase (328 aa).

Mn(2+) is bound by residues His-133, Asp-159, His-161, Asp-163, Asp-253, and Asp-255.

It belongs to the arginase family. The cofactor is Mn(2+).

The enzyme catalyses N-formimidoyl-L-glutamate + H2O = formamide + L-glutamate. It functions in the pathway amino-acid degradation; L-histidine degradation into L-glutamate; L-glutamate from N-formimidoyl-L-glutamate (hydrolase route): step 1/1. Functionally, catalyzes the conversion of N-formimidoyl-L-glutamate to L-glutamate and formamide. This is Formimidoylglutamase from Streptococcus pyogenes serotype M3 (strain ATCC BAA-595 / MGAS315).